Here is a 176-residue protein sequence, read N- to C-terminus: Interleukin-7 (176 aa).

The N-terminal stretch at 1 to 25 is a signal peptide; the sequence is MFHVSFRYIFGIPPLILVLLPVASS. 3 disulfide bridges follow: Cys27/Cys165, Cys58/Cys153, and Cys71/Cys116. Asn94, Asn115, and Asn140 each carry an N-linked (GlcNAc...) asparagine glycan. A disordered region spans residues 118 to 143; it reads SKGKGRKPPSLSEAQPTKNLEENKSS.

The protein belongs to the IL-7/IL-9 family. Interacts with IL7R and CSF2RG.

The protein resides in the secreted. In terms of biological role, hematopoietic cytokine that plays an essential role in the development, expansion, and survival of naive and memory T-cells and B-cells thereby regulating the number of mature lymphocytes and maintaining lymphoid homeostasis. Mechanistically, exerts its biological effects through a receptor composed of IL7RA subunit and the cytokine receptor common subunit gamma/CSF2RG. Binding to the receptor leads to activation of various kinases including JAK1 or JAK3 depending on the cell type and subsequently propagation of signals through activation of several downstream signaling pathways including the PI3K/Akt/mTOR or the JAK-STAT5. In Bos taurus (Bovine), this protein is Interleukin-7 (IL7).